Consider the following 1469-residue polypeptide: Chromosome condensation protein dpy-27 (1469 aa).

Positions 1-25 (MQPFKRRALTSDDDRPYADTDSMPE) are disordered. Basic and acidic residues predominate over residues 9 to 18 (LTSDDDRPYA). 122 to 129 (GPNGSGKS) is a binding site for ATP. Positions 356 to 542 (ELEENKDIML…KGTLQTMMAE (187 aa)) form a coiled coil. In terms of domain architecture, SMC hinge spans 621 to 736 (PGFKGRLGDL…VDSLEEATRI (116 aa)). The interval 758-781 (GALTGGGKPTTGRIRNDNNPNMSG) is disordered. Coiled-coil stretches lie at residues 805-974 (LKLQ…AQLE), 1016-1056 (AYQT…DIIE), and 1159-1182 (TSAK…RMAR). Residues 1404–1469 (LPEFNRFPPA…VQRRVRRSRH (66 aa)) are disordered. Residues 1439–1449 (EEEDEEDELIE) show a composition bias toward acidic residues.

It belongs to the SMC family. SMC4 subfamily. In terms of assembly, component of the dosage compensation complex, which contains the mix-1/SMC2 and dpy-27/SMC4 heterodimer, and three non SMC subunits that probably regulate the complex: dpy-26, capg-1 and dpy-28. Within the complex, interacts with dpy-28, mix-1, dpy-26 and capg-1. Interacts with dpy-21. Interacts with dpy-28; the interaction is required for dpy-28 protein stability and dpy-28 association with the X chromosome. Interacts with smcl-1.

Its subcellular location is the nucleus. It localises to the chromosome. Functionally, central component of the condensin I-like dosage compensation complex that associates specifically with hermaphrodite X chromosomes to reduce their gene transcription throughout development. Its strong similarity with the condensin subunit smc4 suggests that it may reduce the X-chromosome transcript level by condensing the chromatin structure during interphase. Involved in the recruitment of the dosage compensation proteins mix-1 and dpy-21 to the X chromosome. Might be involved in the reduction of histone H4 lysine 16 acetylation (H4K16ac) on dosage compensated X chromosomes. As a member of the dosage compensation complex, also binds to regulatory regions of the autosomal her-1 gene, required for male development, possibly contributing to its repression in hermaphrodites. Also plays a role in the regulation of growth and body fat metabolism downstream of the TOR complex 2 pathway. The sequence is that of Chromosome condensation protein dpy-27 (dpy-27) from Caenorhabditis elegans.